The primary structure comprises 952 residues: Probable mixed-linked glucan synthase 6 (952 aa).

2 helical membrane-spanning segments follow: residues 102-122 and 132-152; these read LLHP…LFVI and AMWL…SWLL. The active site involves Asp227. A coiled-coil region spans residues 278-308; that stretch reads EEFVNDRRRVRKEYDDFKARINGLEHDIKQR. Residues Asp429 and Asp431 each coordinate substrate. Residue Asp636 is part of the active site. Transmembrane regions (helical) follow at residues 718–738, 744–764, 782–802, 834–854, 865–885, and 898–918; these read LFLI…HFIV, MFYV…VLEV, MTAS…KVVF, WLMI…AVAF, WLKV…LYPF, and VVVL…YINI.

It belongs to the glycosyltransferase 2 family. Plant cellulose synthase-like F subfamily.

It is found in the golgi apparatus membrane. Its function is as follows. May catalyze both beta-1,3 and beta-1,4 glycosidic linkage on beta-D-glucan. Essential for (1,3;1,4)-beta-D-glucans synthesis in grasses and cereals (Poaceae). The mixed-linked glucans (which are not present in walls of dicotyledons or most other monocotyledonous plants) are particularly important constituents of the walls of the starchy endosperm and aleurone cells of cereal grains such as oats, wheat, rice and barley. They can account for up to 70% by weight of the wall. The protein is Probable mixed-linked glucan synthase 6 (CSLF6) of Oryza sativa subsp. japonica (Rice).